The primary structure comprises 702 residues: Ribosomal RNA large subunit methyltransferase K/L (702 aa).

The THUMP domain maps to 43-154 (LVYQSLMWSR…KETASIALDL (112 aa)).

It belongs to the methyltransferase superfamily. RlmKL family.

It is found in the cytoplasm. It catalyses the reaction guanosine(2445) in 23S rRNA + S-adenosyl-L-methionine = N(2)-methylguanosine(2445) in 23S rRNA + S-adenosyl-L-homocysteine + H(+). The enzyme catalyses guanosine(2069) in 23S rRNA + S-adenosyl-L-methionine = N(2)-methylguanosine(2069) in 23S rRNA + S-adenosyl-L-homocysteine + H(+). Specifically methylates the guanine in position 2445 (m2G2445) and the guanine in position 2069 (m7G2069) of 23S rRNA. The protein is Ribosomal RNA large subunit methyltransferase K/L of Escherichia coli O139:H28 (strain E24377A / ETEC).